The sequence spans 642 residues: Threonine--tRNA ligase (642 aa).

The TGS domain occupies 1–61 (MPVITLPDGS…ENDAQLSIIT (61 aa)). Residues 243-534 (DHRKIGKQLD…LTEEFAGFFP (292 aa)) are catalytic. Lys-286 carries the post-translational modification N6-acetyllysine. Residues Cys-334, His-385, and His-511 each contribute to the Zn(2+) site.

It belongs to the class-II aminoacyl-tRNA synthetase family. In terms of assembly, homodimer. Requires Zn(2+) as cofactor.

The protein resides in the cytoplasm. It carries out the reaction tRNA(Thr) + L-threonine + ATP = L-threonyl-tRNA(Thr) + AMP + diphosphate + H(+). Catalyzes the attachment of threonine to tRNA(Thr) in a two-step reaction: L-threonine is first activated by ATP to form Thr-AMP and then transferred to the acceptor end of tRNA(Thr). Also edits incorrectly charged L-seryl-tRNA(Thr). The sequence is that of Threonine--tRNA ligase from Escherichia coli O9:H4 (strain HS).